We begin with the raw amino-acid sequence, 136 residues long: Large ribosomal subunit protein uL16c (136 aa).

It belongs to the universal ribosomal protein uL16 family. Part of the 50S ribosomal subunit.

It is found in the plastid. The protein resides in the chloroplast. The protein is Large ribosomal subunit protein uL16c of Oryza sativa (Rice).